Reading from the N-terminus, the 246-residue chain is Polyhedrin (246 aa).

Belongs to the polyhedrin family.

Major component of the virus occlusion bodies, which are large proteinaceous structures (polyhedra), that protect the virus from the outside environment for extended periods until they are ingested by insect larvae. This is Polyhedrin (PH) from Spodoptera exigua nuclear polyhedrosis virus (strain US) (SeMNPV).